The primary structure comprises 714 residues: Fatty acid oxidation complex subunit alpha (714 aa).

The segment at 1-190 is enoyl-CoA hydratase; that stretch reads MEMASAFTLN…KLGLVDDVVP (190 aa). A 3-hydroxyacyl-CoA dehydrogenase region spans residues 306–714; it reads APLNSVGILG…FWKTTATDLQ (409 aa).

This sequence in the N-terminal section; belongs to the enoyl-CoA hydratase/isomerase family. The protein in the central section; belongs to the 3-hydroxyacyl-CoA dehydrogenase family. In terms of assembly, heterotetramer of two alpha chains (FadJ) and two beta chains (FadI).

The protein resides in the cytoplasm. It carries out the reaction a (3S)-3-hydroxyacyl-CoA = a (2E)-enoyl-CoA + H2O. The catalysed reaction is a 4-saturated-(3S)-3-hydroxyacyl-CoA = a (3E)-enoyl-CoA + H2O. The enzyme catalyses a (3S)-3-hydroxyacyl-CoA + NAD(+) = a 3-oxoacyl-CoA + NADH + H(+). It catalyses the reaction (3S)-3-hydroxybutanoyl-CoA = (3R)-3-hydroxybutanoyl-CoA. The protein operates within lipid metabolism; fatty acid beta-oxidation. Catalyzes the formation of a hydroxyacyl-CoA by addition of water on enoyl-CoA. Also exhibits 3-hydroxyacyl-CoA epimerase and 3-hydroxyacyl-CoA dehydrogenase activities. The protein is Fatty acid oxidation complex subunit alpha of Escherichia coli O81 (strain ED1a).